The primary structure comprises 679 residues: MAKRHKHYENRGSSGRGRRGGRAGHRGRGGRRRYAERNNSERAAPVWAGSGDLGNPEMVDDYYFGRQADRRLWKKDSMRMGGFRPGDMGASEQPQSHLPARKRPVTFTLARDVYDPSHNLNQLLNKQLDEGAEEEDSNSSSPSASGDDEPEGEYEPNPEPKMYRISELNDDALFFVDEQGKLPTKIPAVEVAQQETPRSVEFNDTLTVGKVQLQLRQDSNGGTFVDAPHAKRIFRDDLYGDVSEEEDEPETPKTEQLDNSKSVRTMQPPSPVPQLLSTNIGRLTLSELASESESDTEKPTAEAGAEPPKGEPGFGFLDEDHLADMSEIQVTNIRLGAAAHSYFVASPRTFGDSVARWVDHDTMVDIALELGLPEGRLHAYLRHVYEQLVPPEEPADDGADDHYGDENYDDSEEDEQDDEYENDGLIALVEHTLANDPYRNRDYNTKSLEYRGHGSRKRLIIDKESMIDETVRTLLEDKAAQRSAKRAAKRHAKEDYIAEEARMSSDLFRKYPYGFHIENIIDELEAFLVSPRAALEFPPLDPHGRRTLKNLACAFALICKQVGQSTHTRVLVQKGGRYEPDYDAVNRIRRQRRVFMRVDVRRPRDDITPREPRAKFHVREGAIVGGDAPTIGQDNVGRRLLEKLGWTHGEGLGVHGNKGISEPLMARVKKNRSGLRYTE.

4 disordered regions span residues 1 to 40 (MAKR…RNNS), 76 to 161 (DSMR…PEPK), 242 to 315 (VSEE…PGFG), and 391 to 419 (PEEP…QDDE). The span at 16 to 32 (RGRRGGRAGHRGRGGRR) shows a compositional bias: basic residues. A compositionally biased stretch (acidic residues) spans 146-156 (GDDEPEGEYEP). The span at 406–419 (ENYDDSEEDEQDDE) shows a compositional bias: acidic residues. Positions 514–576 (GFHIENIIDE…HTRVLVQKGG (63 aa)) constitute an R3H domain. The 47-residue stretch at 633–679 (QDNVGRRLLEKLGWTHGEGLGVHGNKGISEPLMARVKKNRSGLRYTE) folds into the G-patch domain.

The protein belongs to the SQS1 family.

Its subcellular location is the cytoplasm. It is found in the nucleus. May be involved in splicing. The polypeptide is Protein SQS1 (SQS1) (Eremothecium gossypii (strain ATCC 10895 / CBS 109.51 / FGSC 9923 / NRRL Y-1056) (Yeast)).